A 221-amino-acid chain; its full sequence is Kinetochore protein Spc25 (221 aa).

A coiled-coil region spans residues 63-114 (VIQRREEMEKRVSFMEELAQEVEATKQRNLVMREQIKQQKMLVRQRKNEIME).

The protein belongs to the SPC25 family. In terms of assembly, component of the Ndc80 complex, which is composed of Ndc80, Nuf2 and Spc25.

The protein resides in the nucleus. It is found in the chromosome. It localises to the centromere. The protein localises to the kinetochore. Acts as a component of the essential kinetochore-associated Ndc80 complex, which is required for chromosome segregation and spindle checkpoint activity during meiosis and mitosis. Required for kinetochore integrity and the organization of stable microtubule binding sites in the outer plate of the kinetochore. Participates in SAC signaling that responds specifically to disruptions in spindle microtubule dynamics. The NDC80 complex synergistically enhances the affinity of the SKA1 complex for microtubules and may allow the NDC80 complex to track depolymerizing microtubules. This Drosophila eugracilis (Fruit fly) protein is Kinetochore protein Spc25.